The chain runs to 171 residues: Ferritin heavy chain (171 aa).

Residue M1 is modified to N-acetylmethionine. The residue at position 2 (T2) is an N-acetylthreonine; in Ferritin heavy chain, N-terminally processed. The Ferritin-like diiron domain maps to Q11 to G160. Residues E28, E63, H66, E108, and Q142 each contribute to the Fe cation site.

Belongs to the ferritin family. As to quaternary structure, oligomer of 24 subunits. There are two types of subunits: L (light) chain and H (heavy) chain. The major chain can be light or heavy, depending on the species and tissue type. The functional molecule forms a roughly spherical shell with a diameter of 12 nm and contains a central cavity into which the insoluble mineral iron core is deposited. Interacts with NCOA4; NCOA4 promotes targeting of the iron-binding ferritin complex to autolysosomes following starvation or iron depletion.

Its subcellular location is the cytoplasm. It localises to the lysosome. The protein resides in the cytoplasmic vesicle. It is found in the autophagosome. It catalyses the reaction 4 Fe(2+) + O2 + 4 H(+) = 4 Fe(3+) + 2 H2O. Functionally, stores iron in a soluble, non-toxic, readily available form. Important for iron homeostasis. Has ferroxidase activity. Iron is taken up in the ferrous form and deposited as ferric hydroxides after oxidation. Also plays a role in delivery of iron to cells. Mediates iron uptake in capsule cells of the developing kidney. Delivery to lysosomes is mediated by the cargo receptor NCOA4 for autophagic degradation and release of iron. The polypeptide is Ferritin heavy chain (FTH1) (Ovis aries (Sheep)).